A 429-amino-acid chain; its full sequence is Histidinol dehydrogenase (429 aa).

Residues tyrosine 127, glutamine 188, and asparagine 211 each contribute to the NAD(+) site. 3 residues coordinate substrate: serine 234, glutamine 256, and histidine 259. Zn(2+) is bound by residues glutamine 256 and histidine 259. Catalysis depends on proton acceptor residues glutamate 324 and histidine 325. Positions 325, 358, 412, and 417 each coordinate substrate. Aspartate 358 provides a ligand contact to Zn(2+). Position 417 (histidine 417) interacts with Zn(2+).

This sequence belongs to the histidinol dehydrogenase family. It depends on Zn(2+) as a cofactor.

It carries out the reaction L-histidinol + 2 NAD(+) + H2O = L-histidine + 2 NADH + 3 H(+). It functions in the pathway amino-acid biosynthesis; L-histidine biosynthesis; L-histidine from 5-phospho-alpha-D-ribose 1-diphosphate: step 9/9. In terms of biological role, catalyzes the sequential NAD-dependent oxidations of L-histidinol to L-histidinaldehyde and then to L-histidine. The sequence is that of Histidinol dehydrogenase from Bacillus thuringiensis subsp. konkukian (strain 97-27).